Consider the following 724-residue polypeptide: Phosphoribosylformylglycinamidine synthase subunit PurL (724 aa).

His-46 is an active-site residue. Residues Tyr-49 and Lys-88 each coordinate ATP. Residue Glu-90 participates in Mg(2+) binding. Substrate is bound by residues 91-94 (SHNH) and Arg-113. The Proton acceptor role is filled by His-92. Asp-114 is a Mg(2+) binding site. A substrate-binding site is contributed by Gln-237. Asp-265 serves as a coordination point for Mg(2+). 309–311 (ESQ) is a binding site for substrate. ATP contacts are provided by Asp-489 and Gly-526. Asn-527 is a Mg(2+) binding site. Ser-529 is a substrate binding site.

The protein belongs to the FGAMS family. In terms of assembly, monomer. Part of the FGAM synthase complex composed of 1 PurL, 1 PurQ and 2 PurS subunits.

The protein resides in the cytoplasm. It catalyses the reaction N(2)-formyl-N(1)-(5-phospho-beta-D-ribosyl)glycinamide + L-glutamine + ATP + H2O = 2-formamido-N(1)-(5-O-phospho-beta-D-ribosyl)acetamidine + L-glutamate + ADP + phosphate + H(+). Its pathway is purine metabolism; IMP biosynthesis via de novo pathway; 5-amino-1-(5-phospho-D-ribosyl)imidazole from N(2)-formyl-N(1)-(5-phospho-D-ribosyl)glycinamide: step 1/2. In terms of biological role, part of the phosphoribosylformylglycinamidine synthase complex involved in the purines biosynthetic pathway. Catalyzes the ATP-dependent conversion of formylglycinamide ribonucleotide (FGAR) and glutamine to yield formylglycinamidine ribonucleotide (FGAM) and glutamate. The FGAM synthase complex is composed of three subunits. PurQ produces an ammonia molecule by converting glutamine to glutamate. PurL transfers the ammonia molecule to FGAR to form FGAM in an ATP-dependent manner. PurS interacts with PurQ and PurL and is thought to assist in the transfer of the ammonia molecule from PurQ to PurL. This Granulibacter bethesdensis (strain ATCC BAA-1260 / CGDNIH1) protein is Phosphoribosylformylglycinamidine synthase subunit PurL.